A 539-amino-acid chain; its full sequence is NADH-quinone oxidoreductase subunit N 2 (539 aa).

13 helical membrane passes run 11 to 31 (LIPEFLLLAIAAMVLLGDVLT), 52 to 72 (LMGLGLAFVMVLIQGGFFSWM), 106 to 126 (PLTHIGRLVFIGAAFVTVILT), 141 to 161 (LILFATLGMIFMTAGGELIMI), 193 to 213 (YIFGALSSAILLFGMSLLLGL), 248 to 268 (GVAILALLFILAGMAYKVAIV), 296 to 316 (AGFFLLYRVLVTGFGAPSILG), 329 to 349 (WTSLIAILAALTMLVGNLAAL), 357 to 377 (MLAYSSIAQAGFLMLGLVGTQ), 385 to 405 (LMYLIAYTVTNLSAFGILALV), 429 to 449 (LLLTVAILSLAGIPPLSGFFV), 462 to 484 (AKWLVIFAVSNTVISLYYYLRFL), and 500 to 520 (VGFGPGIVMTAITLLIFGLGI).

The protein belongs to the complex I subunit 2 family. As to quaternary structure, NDH-1 is composed of 14 different subunits. Subunits NuoA, H, J, K, L, M, N constitute the membrane sector of the complex.

Its subcellular location is the cell membrane. The catalysed reaction is a quinone + NADH + 5 H(+)(in) = a quinol + NAD(+) + 4 H(+)(out). In terms of biological role, NDH-1 shuttles electrons from NADH, via FMN and iron-sulfur (Fe-S) centers, to quinones in the respiratory chain. The immediate electron acceptor for the enzyme in this species is believed to be ubiquinone. Couples the redox reaction to proton translocation (for every two electrons transferred, four hydrogen ions are translocated across the cytoplasmic membrane), and thus conserves the redox energy in a proton gradient. The protein is NADH-quinone oxidoreductase subunit N 2 of Herpetosiphon aurantiacus (strain ATCC 23779 / DSM 785 / 114-95).